A 363-amino-acid chain; its full sequence is Large ribosomal subunit protein uL4B (363 aa).

Positions 280-363 (PENIISNADV…EKFLSVLHEN (84 aa)) are C-terminal-extended nuclear localization signal.

This sequence belongs to the universal ribosomal protein uL4 family. In terms of assembly, component of the large ribosomal subunit (LSU). Mature yeast ribosomes consist of a small (40S) and a large (60S) subunit. The 40S small subunit contains 1 molecule of ribosomal RNA (18S rRNA) and at least 33 different proteins. The large 60S subunit contains 3 rRNA molecules (25S, 5.8S and 5S rRNA) and at least 46 different proteins. uL4 is associated with the polypeptide exit tunnel. uL4 interacts with its chaperone ACL4 and the nuclear import receptor KAP104.

It is found in the cytoplasm. In terms of biological role, component of the ribosome, a large ribonucleoprotein complex responsible for the synthesis of proteins in the cell. The small ribosomal subunit (SSU) binds messenger RNAs (mRNAs) and translates the encoded message by selecting cognate aminoacyl-transfer RNA (tRNA) molecules. The large subunit (LSU) contains the ribosomal catalytic site termed the peptidyl transferase center (PTC), which catalyzes the formation of peptide bonds, thereby polymerizing the amino acids delivered by tRNAs into a polypeptide chain. The nascent polypeptides leave the ribosome through a tunnel in the LSU and interact with protein factors that function in enzymatic processing, targeting, and the membrane insertion of nascent chains at the exit of the ribosomal tunnel. The polypeptide is Large ribosomal subunit protein uL4B (rpl401) (Schizosaccharomyces pombe (strain 972 / ATCC 24843) (Fission yeast)).